Consider the following 155-residue polypeptide: Endoribonuclease YbeY (155 aa).

The Zn(2+) site is built by His-114, His-118, and His-124.

The protein belongs to the endoribonuclease YbeY family. It depends on Zn(2+) as a cofactor.

It localises to the cytoplasm. Functionally, single strand-specific metallo-endoribonuclease involved in late-stage 70S ribosome quality control and in maturation of the 3' terminus of the 16S rRNA. The polypeptide is Endoribonuclease YbeY (Tolumonas auensis (strain DSM 9187 / NBRC 110442 / TA 4)).